A 474-amino-acid polypeptide reads, in one-letter code: bZIP transcription factor hapX (474 aa).

Polar residues predominate over residues 1-10 (MSTSAGTPTS). A disordered region spans residues 1–82 (MSTSAGTPTS…RKAQNRAAQR (82 aa)). The 42-residue stretch at 67 to 108 (DTPPTKRKAQNRAAQRAFRERRAARVGELEEQIKKIEEENER) folds into the bZIP domain. The interval 72-91 (KRKAQNRAAQRAFRERRAAR) is basic motif. The leucine-zipper stretch occupies residues 95–102 (LEEQIKKI). 3 disordered regions span residues 201–242 (QMQT…TDFT), 282–317 (EDQPSDRSNQPSQLTKLPPIQNISQFTPPPSEGDVL), and 429–449 (TLPNPQNLNPDRRRDQNLTNR). The segment covering 287-307 (DRSNQPSQLTKLPPIQNISQF) has biased composition (polar residues).

This sequence belongs to the bZIP family. YAP subfamily.

The protein resides in the nucleus. In terms of biological role, iron regulator crucial for the adaptation to iron starvation and iron excess, but is dispensable for virulence. SreA represses the expression of hapX and the siderophore system during iron sufficient conditions by an iron-sensing mechanism, while hapX represses sreA and activates the siderophore system during iron-limiting conditions, resulting in efficient iron uptake and inhibition of iron-consuming pathways. HapX targets include genes encoding a number of key iron-regulated factors such as the vacuolar iron importer cccA, as well as hemA, cycA and lysF involved in heme biosynthesis, respiration and lysine biosynthesis, respectively. Activation of the vacuolar iron importer cccA during high iron conditions is essential for iron detoxification. The sequence is that of bZIP transcription factor hapX from Arthroderma benhamiae (strain ATCC MYA-4681 / CBS 112371) (Trichophyton mentagrophytes).